Reading from the N-terminus, the 243-residue chain is Derlin-1.2 (243 aa).

The Cytoplasmic portion of the chain corresponds to 1–20 (MSSPAEYYKSLPPISKAYGT). The helical transmembrane segment at 21 to 41 (LCFFTTVLVRLHILNPLFLYL) threads the bilayer. Residues 42–54 (YYPRVFKKFEVWR) are Lumenal-facing. The helical transmembrane segment at 55–75 (IFTSFFFLGPFSINFGIRLLM) threads the bilayer. At 76-94 (IARYGVMLEKGAFDKRTAD) the chain is on the cytoplasmic side. The chain crosses the membrane as a helical span at residues 95–115 (FLWMMIFGAISLLVLSVIPQL). The Lumenal portion of the chain corresponds to 116–155 (NTYVLGLPMVSMLVYVWSRENPNAQINIYGILQLKAFYLP). The helical transmembrane segment at 156–176 (WVMLLLDVIFGSPLMPGLLGI) threads the bilayer. Residues 177-243 (MVGHLYYYFA…FRGRSYRLNQ (67 aa)) are Cytoplasmic-facing.

Belongs to the derlin family. Expressed in roots and endosperm.

Its subcellular location is the endoplasmic reticulum membrane. In terms of biological role, may be involved in the degradation process of specific misfolded endoplasmic reticulum (ER) luminal proteins. The protein is Derlin-1.2 (DER1.2) of Zea mays (Maize).